Here is a 258-residue protein sequence, read N- to C-terminus: MMVLQVSAAPRTVALTALLMVLLTSVVQGRATPENYLFQGRQECYAFNGTQRFLERYIYNREEFARFDSDVGEFRAVTELGRPAAEYWNSQKDILEEKRAVPDRMCRHNYELGGPMTLQRRVQPRVNVSPSKKGPLQHHNLLVCHVTDFYPGSIQVRWFLNGQEETAGVVSTNLIRNGDWTFQILVMLEMTPQQGDVYTCQVEHTSLDSPVTVEWKAQSDSARSKTLTGAGGFVLGLIICGVGIFMHRRSKKVQRGSA.

Positions 1-29 (MMVLQVSAAPRTVALTALLMVLLTSVVQG) are cleaved as a signal peptide. The tract at residues 30–121 (RATPENYLFQ…LGGPMTLQRR (92 aa)) is beta-1. The Extracellular segment spans residues 30 to 225 (RATPENYLFQ…KAQSDSARSK (196 aa)). 2 cysteine pairs are disulfide-bonded: Cys-44–Cys-106 and Cys-144–Cys-200. Residue Asn-48 is glycosylated (N-linked (GlcNAc...) asparagine). Positions 122 to 215 (VQPRVNVSPS…SLDSPVTVEW (94 aa)) are beta-2. The 89-residue stretch at 124–212 (PRVNVSPSKK…EHTSLDSPVT (89 aa)) folds into the Ig-like C1-type domain. A connecting peptide region spans residues 216–225 (KAQSDSARSK). The helical transmembrane segment at 226–246 (TLTGAGGFVLGLIICGVGIFM) threads the bilayer. Residues 247–258 (HRRSKKVQRGSA) are Cytoplasmic-facing.

Belongs to the MHC class II family. Heterodimer of an alpha and a beta subunit; also referred as MHC class II molecule. In the endoplasmic reticulum (ER) it forms a heterononamer; 3 MHC class II molecules bind to a CD74 homotrimer (also known as invariant chain or HLA class II histocompatibility antigen gamma chain). In the endosomal/lysosomal system; CD74 undergoes sequential degradation by various proteases; leaving a small fragment termed CLIP on each MHC class II molecule. MHC class II molecule interacts with HLA_DM, and HLA_DO in B-cells, in order to release CLIP and facilitate the binding of antigenic peptides.

Its subcellular location is the cell membrane. The protein resides in the endoplasmic reticulum membrane. The protein localises to the golgi apparatus. It is found in the trans-Golgi network membrane. It localises to the endosome membrane. Its subcellular location is the lysosome membrane. Its function is as follows. Binds peptides derived from antigens that access the endocytic route of antigen presenting cells (APC) and presents them on the cell surface for recognition by the CD4 T-cells. The peptide binding cleft accommodates peptides of 10-30 residues. The peptides presented by MHC class II molecules are generated mostly by degradation of proteins that access the endocytic route, where they are processed by lysosomal proteases and other hydrolases. Exogenous antigens that have been endocytosed by the APC are thus readily available for presentation via MHC II molecules, and for this reason this antigen presentation pathway is usually referred to as exogenous. As membrane proteins on their way to degradation in lysosomes as part of their normal turn-over are also contained in the endosomal/lysosomal compartments, exogenous antigens must compete with those derived from endogenous components. Autophagy is also a source of endogenous peptides, autophagosomes constitutively fuse with MHC class II loading compartments. In addition to APCs, other cells of the gastrointestinal tract, such as epithelial cells, express MHC class II molecules and CD74 and act as APCs, which is an unusual trait of the GI tract. To produce a MHC class II molecule that presents an antigen, three MHC class II molecules (heterodimers of an alpha and a beta chain) associate with a CD74 trimer in the ER to form a heterononamer. Soon after the entry of this complex into the endosomal/lysosomal system where antigen processing occurs, CD74 undergoes a sequential degradation by various proteases, including CTSS and CTSL, leaving a small fragment termed CLIP (class-II-associated invariant chain peptide). The removal of CLIP is facilitated by HLA-DM via direct binding to the alpha-beta-CLIP complex so that CLIP is released. HLA-DM stabilizes MHC class II molecules until primary high affinity antigenic peptides are bound. The MHC II molecule bound to a peptide is then transported to the cell membrane surface. In B-cells, the interaction between HLA-DM and MHC class II molecules is regulated by HLA-DO. Primary dendritic cells (DCs) also to express HLA-DO. Lysosomal microenvironment has been implicated in the regulation of antigen loading into MHC II molecules, increased acidification produces increased proteolysis and efficient peptide loading. The chain is HLA class II histocompatibility antigen, DP beta 1 chain (HLA-DPB1) from Homo sapiens (Human).